The chain runs to 559 residues: MARRAAAGLLRRHLGPLAAGETLQARGMYPKQYGAANHAFSRFYSIQGQQRSLYGFRTNVETDDTQQSARMNFEVQKRSFSSAAAHVQRNPAYSVLNSDDVSYFKSILGDSGVVQDEDRVSVANMDWMGKYKGSSQLLLLPKSTAEVSKILSYCNSRRLAVVPQGGNTGLVGGSVPVYDEVIISLGGMDKIITFDNVNGILTCEAGCVLENLSSYVENKGFIMPLDLGAKGSCHIGGNISTNAGGLRFIRYGSLHGSVLGLEVVLADGTVLDMLTTLRKDNTGYDLKHLFIGSEGSLGIVTKIAILTPAKLPSTNVAFLSCNDYISCQKLLLAARRSLGEILSAFEFMDRHCINLAMKYLEGVHNPLPVSPYNFYVLIETTGSDESYDKAKLEAFLLRSMEDGLVADGVIAQDISQASNFWRIREGISEASVKVGAVYKYDLSIPVEKLYDIVEEMRSRVGDMGQVLGYGHLGDGNLHLNILSTKYSDKMLAQIEPFVYEWTSKQRGSISAEHGLGLMKADKIHYSKSSEAVQLMTSIKKLLDPNSILNPYKVLPQSVL.

The transit peptide at 1–80 directs the protein to the mitochondrion; it reads MARRAAAGLL…MNFEVQKRSF (80 aa). One can recognise an FAD-binding PCMH-type domain in the interval 131–310; the sequence is YKGSSQLLLL…TKIAILTPAK (180 aa).

This sequence belongs to the FAD-binding oxidoreductase/transferase type 4 family. As to quaternary structure, homodimer. Requires FAD as cofactor.

The protein localises to the mitochondrion. It carries out the reaction (R)-2-hydroxyglutarate + A = 2-oxoglutarate + AH2. Its function is as follows. Catalyzes the oxidation of D-2-hydroxyglutarate to alpha-ketoglutarate. This chain is Probable D-2-hydroxyglutarate dehydrogenase, mitochondrial (D2HGDH), found in Oryza sativa subsp. indica (Rice).